The chain runs to 196 residues: Mpv17-like protein (196 aa).

The Cytoplasmic segment spans residues 1-16 (MVSWWQALTRAAGRYP). The targeting to peroxisomes stretch occupies residues 16 to 55 (PWPANVLLYAGFFSGGDALQQVLRGGPADWQHTRHVATVA). A helical transmembrane segment spans residues 17-34 (WPANVLLYAGFFSGGDAL). Over 35 to 50 (QQVLRGGPADWQHTRH) the chain is Lumenal. A helical transmembrane segment spans residues 51-67 (VATVAVAFHANLNYVWL). At 68–90 (NLLERALPGRAPRTILAKVLCDQ) the chain is on the cytoplasmic side. A helical transmembrane segment spans residues 91 to 108 (ALGGPVYVSTFYAGMSIL). The Lumenal segment spans residues 109 to 150 (QGKDDIFLDMRQKFWNTYKSGLMYWPFVQLINFSLIPIRWRT). The chain crosses the membrane as a helical span at residues 151 to 167 (AYTGLCGFLWATFLCFS). Topologically, residues 168–196 (QQEGDGTFKSAFTFRRIKVTNEVEKPSEK) are cytoplasmic.

It belongs to the peroxisomal membrane protein PXMP2/4 family.

The protein localises to the peroxisome membrane. In terms of biological role, participates in reactive oxygen species metabolism by up- or down-regulation of the genes of antioxidant enzymes. Protective against the mitochondrial apoptotic cascade. The protein is Mpv17-like protein (MPV17L) of Bos taurus (Bovine).